A 201-amino-acid polypeptide reads, in one-letter code: Molybdenum cofactor guanylyltransferase (201 aa).

GTP contacts are provided by residues 15–17, Lys-28, Asp-74, and Asp-104; that span reads LAG. Asp-104 is a binding site for Mg(2+).

This sequence belongs to the MobA family. In terms of assembly, monomer. The cofactor is Mg(2+).

It localises to the cytoplasm. It carries out the reaction Mo-molybdopterin + GTP + H(+) = Mo-molybdopterin guanine dinucleotide + diphosphate. In terms of biological role, transfers a GMP moiety from GTP to Mo-molybdopterin (Mo-MPT) cofactor (Moco or molybdenum cofactor) to form Mo-molybdopterin guanine dinucleotide (Mo-MGD) cofactor. This chain is Molybdenum cofactor guanylyltransferase, found in Pseudomonas syringae pv. tomato (strain ATCC BAA-871 / DC3000).